The sequence spans 1166 residues: MKTNAKFDRKEISKIYKNIARHHIDSFDFAMSTCLNRACEHMLPFDYIVPEESASCGFKKLTLWYDSFELGQPSLGEIDYDSHILYPSECRQRKMTYTIPLFATIFKKFDDEMVDNFKVKLGDIPTMGRKKFCNLKGLTKKELAKRGEDMLEFGGYFIVNGNEKVIRMLIVPKRNFPIAFKRSKFLERGKDFTDYGVQMRCVRDDFTAQTITLTYLSDGSVSLRLIYQKQEFLIPIILILKALKNCTDRQIYERIVKGNFNQRQISDRVEAILAVGKDLNIYDSDQSKALIGSRFRIVLAGITSETSDIDAGDLFLSKHICIHTDSYEAKFDTLILMIDKLYASVANEVELDNLDSVAMQDVLLGGHLYLQILSEKLFDCLHINLRARLNKELKRHNFDPMKFRDVLTNQKINCGIGLIGKRMENFLATGNLISRTNLDLMQTSGFCIIGDKLNNIRFLSHFRSIHRGQYFAEQKTTSVRKLLPESWGFICPVHTPDGAPCGLLNHISMSCVPIGSEEKQIDIDKFRNILGELGMNSISSDLCLNYHTGYYPVIFDGIHLGYVEKDIGESFVEGLRYLKCTQSQPDYAIPRTLEIAFIPFSGYSRNLQWPGIFLASTPARFTRPVKNLHYNCIEWISPLEQMNLSIACTDEDITPETTHQELDPINILSIVASVGVFAEYNQSPRNMYQCQMAKQTMGTPYHNHQFRTDNKIYRLLFPHRPIVKTRTQVDFDIEEYPSGTNAVVAVISYTGYDLEDAMIINKSSYERGFGHGVVYKSYTHDLNESNSQSTRGIKSSVRYKFLNNVSQKDKSKIKLENIDPDGLPKIGSQLTKGKPELCIFDTLKRGAKLSKFKDSEKARIETVRVCGNDDKNPDNLSIGYTIRYSRIPVIGDKFSSRHGQKGVLSVLWPQVDMPFTENGITPDLIINPHAFPSRMTMGMLIQSMAAKSGSLRGEFKTVETFQRYDDNDIVGHFGKELLDKGFNYHGNELMYSGIFGTPLKADIFIGVVYYQRLRHMVSDKSQARGTGPIDILTHQPVKGRKKGGGIRFGEMERDSLLAHGAAYCLNDRLFRSSDYSEGFVCQNCGSILSCYVNRAIMKTQTFIPPSLDESNKDTEDKEIHMNEKVICKVCKKNSNCKKVALPFVLRFLANELASMGIKLKFTVNDF.

The C4-type zinc finger occupies 1081–1130; that stretch reads CQNCGSILSCYVNRAIMKTQTFIPPSLDESNKDTEDKEIHMNEKVICKVC.

It belongs to the RNA polymerase beta chain family. In terms of assembly, component of the RNA polymerase I (Pol I) complex consisting of at least 13 subunits.

The protein resides in the nucleus. It localises to the nucleolus. The catalysed reaction is RNA(n) + a ribonucleoside 5'-triphosphate = RNA(n+1) + diphosphate. Functionally, DNA-dependent RNA polymerase catalyzes the transcription of DNA into RNA using the four ribonucleoside triphosphates as substrates. Second largest core component of RNA polymerase I which synthesizes ribosomal RNA precursors. Proposed to contribute to the polymerase catalytic activity and forms the polymerase active center together with the largest subunit. Pol I is composed of mobile elements and RPA2 is part of the core element with the central large cleft and probably a clamp element that moves to open and close the cleft. The protein is DNA-directed RNA polymerase I subunit RPA2 (RPA2) of Euplotoides octocarinatus (Freshwater ciliate).